A 160-amino-acid polypeptide reads, in one-letter code: Small ribosomal subunit protein bS6 (160 aa).

The tract at residues 100 to 160 is disordered; that stretch reads PSSVLARKSD…DDARETAGAE (61 aa). 2 stretches are compositionally biased toward basic and acidic residues: residues 106-116 and 136-160; these read RKSDDRGDRGN and RSSE…AGAE.

This sequence belongs to the bacterial ribosomal protein bS6 family.

Binds together with bS18 to 16S ribosomal RNA. This Gluconobacter oxydans (strain 621H) (Gluconobacter suboxydans) protein is Small ribosomal subunit protein bS6.